Reading from the N-terminus, the 217-residue chain is Adenylate kinase (217 aa).

Position 10 to 15 (10 to 15 (GAGKGT)) interacts with ATP. An NMP region spans residues 30 to 59 (STGDMLRAAVKAGTPLGLEAKKVMDSGGLV). AMP is bound by residues Thr31, Arg36, 57–59 (GLV), 85–88 (GFPR), and Gln92. Residues 122-159 (GRRVHVASGRTYHVKFNPPKVAGVDDVTGEPLIQRDDD) are LID. ATP-binding positions include Arg123 and 132–133 (TY). Residues Arg156 and Arg167 each contribute to the AMP site. Residue Gly203 participates in ATP binding.

Belongs to the adenylate kinase family. As to quaternary structure, monomer.

Its subcellular location is the cytoplasm. It catalyses the reaction AMP + ATP = 2 ADP. The protein operates within purine metabolism; AMP biosynthesis via salvage pathway; AMP from ADP: step 1/1. In terms of biological role, catalyzes the reversible transfer of the terminal phosphate group between ATP and AMP. Plays an important role in cellular energy homeostasis and in adenine nucleotide metabolism. The sequence is that of Adenylate kinase from Methylibium petroleiphilum (strain ATCC BAA-1232 / LMG 22953 / PM1).